The following is a 161-amino-acid chain: Cyclic pyranopterin monophosphate synthase (161 aa).

Residues 75–77 and 113–114 each bind substrate; these read LCH and ME. Aspartate 128 is an active-site residue.

Belongs to the MoaC family. In terms of assembly, homohexamer; trimer of dimers.

The catalysed reaction is (8S)-3',8-cyclo-7,8-dihydroguanosine 5'-triphosphate = cyclic pyranopterin phosphate + diphosphate. Its pathway is cofactor biosynthesis; molybdopterin biosynthesis. Its function is as follows. Catalyzes the conversion of (8S)-3',8-cyclo-7,8-dihydroguanosine 5'-triphosphate to cyclic pyranopterin monophosphate (cPMP). The polypeptide is Cyclic pyranopterin monophosphate synthase (Enterobacter sp. (strain 638)).